The primary structure comprises 309 residues: Methionyl-tRNA formyltransferase (309 aa).

109 to 112 (SLLP) contacts (6S)-5,6,7,8-tetrahydrofolate.

It belongs to the Fmt family.

The enzyme catalyses L-methionyl-tRNA(fMet) + (6R)-10-formyltetrahydrofolate = N-formyl-L-methionyl-tRNA(fMet) + (6S)-5,6,7,8-tetrahydrofolate + H(+). Attaches a formyl group to the free amino group of methionyl-tRNA(fMet). The formyl group appears to play a dual role in the initiator identity of N-formylmethionyl-tRNA by promoting its recognition by IF2 and preventing the misappropriation of this tRNA by the elongation apparatus. The protein is Methionyl-tRNA formyltransferase of Clostridioides difficile (strain 630) (Peptoclostridium difficile).